We begin with the raw amino-acid sequence, 750 residues long: uncharacterized protein (750 aa).

18 N-linked (GlcNAc...) asparagine glycosylation sites follow: Asn61, Asn84, Asn115, Asn154, Asn176, Asn197, Asn207, Asn228, Asn241, Asn267, Asn293, Asn299, Asn312, Asn335, Asn351, Asn373, Asn389, and Asn519. Residues Ser675 and Ser678 each carry the phosphoserine modification. Residue Lys697 forms a Glycyl lysine isopeptide (Lys-Gly) (interchain with G-Cter in ubiquitin) linkage. Polar residues-rich tracts occupy residues 703 to 726 (EITAIDNSSSANNTDVTGSTSNRT) and 736 to 750 (KDSNGPVNNNAHLVA). The interval 703 to 750 (EITAIDNSSSANNTDVTGSTSNRTELSHPDVTPKDSNGPVNNNAHLVA) is disordered. 3 N-linked (GlcNAc...) asparagine glycosylation sites follow: Asn709, Asn714, and Asn724.

In terms of processing, N-glycosylated.

It localises to the mitochondrion. This is an uncharacterized protein from Saccharomyces cerevisiae (strain ATCC 204508 / S288c) (Baker's yeast).